The chain runs to 583 residues: Isocitrate dehydrogenase kinase/phosphatase (583 aa).

ATP contacts are provided by residues 315–321 (APGIRGM) and Lys-336. The active site involves Asp-371.

The protein belongs to the AceK family.

It localises to the cytoplasm. The catalysed reaction is L-seryl-[isocitrate dehydrogenase] + ATP = O-phospho-L-seryl-[isocitrate dehydrogenase] + ADP + H(+). In terms of biological role, bifunctional enzyme which can phosphorylate or dephosphorylate isocitrate dehydrogenase (IDH) on a specific serine residue. This is a regulatory mechanism which enables bacteria to bypass the Krebs cycle via the glyoxylate shunt in response to the source of carbon. When bacteria are grown on glucose, IDH is fully active and unphosphorylated, but when grown on acetate or ethanol, the activity of IDH declines drastically concomitant with its phosphorylation. In Salmonella agona (strain SL483), this protein is Isocitrate dehydrogenase kinase/phosphatase.